We begin with the raw amino-acid sequence, 324 residues long: ATP-dependent 6-phosphofructokinase (324 aa).

Gly15 lines the ATP pocket. Arg25–Arg29 serves as a coordination point for ADP. ATP-binding positions include Arg76–Phe77 and Gly106–Ser109. Mg(2+) is bound at residue Asp107. Thr130 to Asp132 is a substrate binding site. The Proton acceptor role is filled by Asp132. Arg159 contacts ADP. Residues Arg167 and Met174–Arg176 contribute to the substrate site. Residues Gly190–Glu192, Lys216, and Lys218–His220 each bind ADP. Substrate is bound by residues Glu227, Arg248, and His254 to Arg257.

This sequence belongs to the phosphofructokinase type A (PFKA) family. ATP-dependent PFK group I subfamily. Prokaryotic clade 'B1' sub-subfamily. In terms of assembly, homotetramer. It depends on Mg(2+) as a cofactor.

It localises to the cytoplasm. It catalyses the reaction beta-D-fructose 6-phosphate + ATP = beta-D-fructose 1,6-bisphosphate + ADP + H(+). Its pathway is carbohydrate degradation; glycolysis; D-glyceraldehyde 3-phosphate and glycerone phosphate from D-glucose: step 3/4. Allosterically activated by ADP and other diphosphonucleosides, and allosterically inhibited by phosphoenolpyruvate. In terms of biological role, catalyzes the phosphorylation of D-fructose 6-phosphate to fructose 1,6-bisphosphate by ATP, the first committing step of glycolysis. This Actinobacillus pleuropneumoniae serotype 5b (strain L20) protein is ATP-dependent 6-phosphofructokinase.